We begin with the raw amino-acid sequence, 51 residues long: Sperm protamine P1 (51 aa).

The protein belongs to the protamine P1 family. In terms of tissue distribution, testis.

The protein localises to the nucleus. The protein resides in the chromosome. In terms of biological role, protamines substitute for histones in the chromatin of sperm during the haploid phase of spermatogenesis. They compact sperm DNA into a highly condensed, stable and inactive complex. The polypeptide is Sperm protamine P1 (PRM1) (Nasalis larvatus (Proboscis monkey)).